Reading from the N-terminus, the 807-residue chain is MSTPENTLVTPNTSDTIPTASAAKRYDIVVTCADGLEAPLQTELSHMDISHELKSTGRIAVNATLEQIYKICLWSRVASRVLLPIKKRNINKEYDVAEQLNGLARTVDWTEWFELDNTFAIRMSVDKRVQVSQQFAMLRIKDAIADTFSEKLDARPDVDSNNPDFPIYATVNEKQAEIFLDLSGTSLHRRGYRVAMTDAPLKENLAAGLLYTVGWHKTKNSYSALIDPMCGSGTFIIEALLMHCDYPVGIDKAESQFGFYNWQEHDSELWQQCVVQAQERFHNGLQKAAAGKLPTILGFDADAGAIKAVHKNLIAAGLIELIPHLTLEQRPLSQLKIALAKPLLDRKLKRPLVITNPPYGERLGESDFIKPLYQGLGLTLQEIFAKQKYQPMLGLLAAHVEQADVLPIEDPQTLRCHNGAITVYFRHGQLIRKEGESLITRFEKTEIKVDEAQDFVNRLQKNVNHLKKLAAKEDVTNLRVYDADLPDYKVAIDVYGDYVHVQEWAPPKSIPPETARKRFNLALMGIREVFGINREQIFIKTRARQVGNTQYGNPEASAQSKESKNAPEPKKDNRNRYKGNKFQQAREEAKRQEAQRLAQKKRKMHVVQEDGAYFYVNFTDYLDTGLFIDHRNMRSMIRSASRGADVLNLFAYTCTASVHAALGGAKSVTSVDLSQNYLDWGKQNFALNGLDVTTSRYQFIASDIFDWIKDNTDQFDVIFIDPPTFSNSKKFQGTFDVQRDHTALINRAMNRLANGGVIYFSNNFTKFELDEELYDRYEVTEITSETIGFDFNPKKPIHHSFEIRHKL.

The THUMP domain occupies 67 to 182 (QIYKICLWSR…EKQAEIFLDL (116 aa)). Residues 548-560 (NTQYGNPEASAQS) are compositionally biased toward polar residues. The interval 548–602 (NTQYGNPEASAQSKESKNAPEPKKDNRNRYKGNKFQQAREEAKRQEAQRLAQKKR) is disordered. Basic and acidic residues-rich tracts occupy residues 561 to 575 (KESKNAPEPKKDNRN) and 584 to 594 (QAREEAKRQEA).

Belongs to the methyltransferase superfamily. RlmKL family.

The protein resides in the cytoplasm. It catalyses the reaction guanosine(2445) in 23S rRNA + S-adenosyl-L-methionine = N(2)-methylguanosine(2445) in 23S rRNA + S-adenosyl-L-homocysteine + H(+). The catalysed reaction is guanosine(2069) in 23S rRNA + S-adenosyl-L-methionine = N(2)-methylguanosine(2069) in 23S rRNA + S-adenosyl-L-homocysteine + H(+). Its function is as follows. Specifically methylates the guanine in position 2445 (m2G2445) and the guanine in position 2069 (m7G2069) of 23S rRNA. This Psychrobacter sp. (strain PRwf-1) protein is Ribosomal RNA large subunit methyltransferase K/L.